The chain runs to 239 residues: Purine nucleoside phosphorylase DeoD-type (239 aa).

An a purine D-ribonucleoside-binding site is contributed by His5. Residues Gly21, Arg25, Arg44, and 88 to 91 (RVGS) contribute to the phosphate site. A purine D-ribonucleoside-binding positions include 180–182 (EME) and 204–205 (SD). Residue Asp205 is the Proton donor of the active site.

Belongs to the PNP/UDP phosphorylase family. In terms of assembly, homohexamer; trimer of homodimers.

The catalysed reaction is a purine D-ribonucleoside + phosphate = a purine nucleobase + alpha-D-ribose 1-phosphate. It carries out the reaction a purine 2'-deoxy-D-ribonucleoside + phosphate = a purine nucleobase + 2-deoxy-alpha-D-ribose 1-phosphate. In terms of biological role, catalyzes the reversible phosphorolytic breakdown of the N-glycosidic bond in the beta-(deoxy)ribonucleoside molecules, with the formation of the corresponding free purine bases and pentose-1-phosphate. The polypeptide is Purine nucleoside phosphorylase DeoD-type (Klebsiella pneumoniae (strain 342)).